The primary structure comprises 625 residues: UvrABC system protein C (625 aa).

Residues 26–105 (LEPGVYFLRD…IKQHQPHFNT (80 aa)) form the GIY-YIG domain. Residues 215 to 250 (GELLEKLATKMLAASENLDFEQAATIRDQIRGLQAL) enclose the UVR domain.

The protein belongs to the UvrC family. Interacts with UvrB in an incision complex.

The protein resides in the cytoplasm. The UvrABC repair system catalyzes the recognition and processing of DNA lesions. UvrC both incises the 5' and 3' sides of the lesion. The N-terminal half is responsible for the 3' incision and the C-terminal half is responsible for the 5' incision. The sequence is that of UvrABC system protein C from Microcystis aeruginosa (strain NIES-843 / IAM M-2473).